The primary structure comprises 377 residues: Succinyl-diaminopimelate desuccinylase (377 aa).

His66 provides a ligand contact to Zn(2+). Asp68 is an active-site residue. Position 99 (Asp99) interacts with Zn(2+). The Proton acceptor role is filled by Glu133. 3 residues coordinate Zn(2+): Glu134, Glu162, and His348.

It belongs to the peptidase M20A family. DapE subfamily. In terms of assembly, homodimer. Requires Zn(2+) as cofactor. Co(2+) serves as cofactor.

The enzyme catalyses N-succinyl-(2S,6S)-2,6-diaminopimelate + H2O = (2S,6S)-2,6-diaminopimelate + succinate. The protein operates within amino-acid biosynthesis; L-lysine biosynthesis via DAP pathway; LL-2,6-diaminopimelate from (S)-tetrahydrodipicolinate (succinylase route): step 3/3. Its function is as follows. Catalyzes the hydrolysis of N-succinyl-L,L-diaminopimelic acid (SDAP), forming succinate and LL-2,6-diaminopimelate (DAP), an intermediate involved in the bacterial biosynthesis of lysine and meso-diaminopimelic acid, an essential component of bacterial cell walls. The chain is Succinyl-diaminopimelate desuccinylase from Chromobacterium violaceum (strain ATCC 12472 / DSM 30191 / JCM 1249 / CCUG 213 / NBRC 12614 / NCIMB 9131 / NCTC 9757 / MK).